Here is a 513-residue protein sequence, read N- to C-terminus: 2-isopropylmalate synthase (513 aa).

Residues 4–266 (IEFFDTSLRD…QSPLKLSETA (263 aa)) enclose the Pyruvate carboxyltransferase domain. The Mn(2+) site is built by aspartate 13, histidine 201, histidine 203, and asparagine 237. The tract at residues 390–513 (ILDNVQIDGH…VEQISAHDGI (124 aa)) is regulatory domain.

Belongs to the alpha-IPM synthase/homocitrate synthase family. LeuA type 1 subfamily. Homodimer. It depends on Mn(2+) as a cofactor.

The protein localises to the cytoplasm. The enzyme catalyses 3-methyl-2-oxobutanoate + acetyl-CoA + H2O = (2S)-2-isopropylmalate + CoA + H(+). The protein operates within amino-acid biosynthesis; L-leucine biosynthesis; L-leucine from 3-methyl-2-oxobutanoate: step 1/4. Its function is as follows. Catalyzes the condensation of the acetyl group of acetyl-CoA with 3-methyl-2-oxobutanoate (2-ketoisovalerate) to form 3-carboxy-3-hydroxy-4-methylpentanoate (2-isopropylmalate). The sequence is that of 2-isopropylmalate synthase from Lactococcus lactis subsp. lactis (strain IL1403) (Streptococcus lactis).